The chain runs to 968 residues: MATATTTATAAFSGVVSVGTETRRIYSFSHLQPSAAFPAKPSSFKSLKLKQSARLTRRLDHRPFVVRCEASSSNGRLTQQEFTEMAWQSIVSSPDVAKENKQQIVETEHLMKALLEQKNGLARRIFSKIGVDNTKVLEATEKFIQRQPKVYGDAAGSMLGRDLEALFQRARQFKKDLKDSYVSVEHLVLAFADDKRFGKQLFKDFQISERSLKSAIESIRGKQSVIDQDPEGKYEALEKYGKDLTAMAREGKLDPVIGRDDEIRRCIQILSRRTKNNPVLIGEPGVGKTAISEGLAQRIVQGDVPQALMNRKLISLDMGALIAGAKYRGEFEDRLKAVLKEVTDSEGQIILFIDEIHTVVGAGATNGAMDAGNLLKPMLGRGELRCIGATTLDEYRKYIEKDPALERRFQQVYVDQPTVEDTISILRGLRERYELHHGVRISDSALVEAAILSDRYISGRFLPDKAIDLVDEAAAKLKMEITSKPTALDELDRSVIKLEMERLSLTNDTDKASRERLNRIETELVLLKEKQAELTEQWEHERSVMSRLQSIKEEIDRVNLEIQQAEREYDLNRAAELKYGSLNSLQRQLNEAEKELNEYLSSGKSMFREEVLGSDIAEIVSKWTGIPVSKLQQSERDKLLHLEEELHKRVVGQNPAVTAVAEAIQRSRAGLSDPGRPIASFMFMGPTGVGKTELAKALASYMFNTEEALVRIDMSEYMEKHAVSRLIGAPPGYVGYEEGGQLTETVRRRPYSVILFDEIEKAHGDVFNVFLQILDDGRVTDSQGRTVSFTNTVIIMTSNVGSQFILNNTDDDANELSYETIKERVMNAARSIFRPEFMNRVDEYIVFKPLDREQINRIVRLQLARVQKRIADRKMKINITDAAVDLLGSLGYDPNYGARPVKRVIQQNIENELAKGILRGDFKEEDGILIDTEVTAFSNGQLPQQKLTFKKIESETADAEQEEAAFSK.

The transit peptide at 1–67 directs the protein to the chloroplast; the sequence is MATATTTATA…RLDHRPFVVR (67 aa). One can recognise a Clp R domain in the interval 78 to 222; sequence TQQEFTEMAW…KSAIESIRGK (145 aa). Repeat regions lie at residues 82–147 and 159–222; these read FTEM…IQRQ and LGRD…IRGK. The segment at 237–485 is i; that stretch reads LEKYGKDLTA…KLKMEITSKP (249 aa). 282 to 289 contributes to the ATP binding site; sequence GEPGVGKT. Positions 488-606 form a coiled coil; that stretch reads LDELDRSVIK…NEYLSSGKSM (119 aa). The II stretch occupies residues 611 to 802; sequence VLGSDIAEIV…VIIMTSNVGS (192 aa). Residue 685–692 coordinates ATP; sequence GPTGVGKT.

Belongs to the ClpA/ClpB family.

It is found in the plastid. It localises to the chloroplast. In terms of biological role, molecular chaperone essential for chloroplast development and seedling viability. Mediates internal thylakoid membrane formation and confers thermotolerance to chloroplasts during heat stress. The polypeptide is Chaperone protein ClpB3, chloroplastic (CLPB3) (Arabidopsis thaliana (Mouse-ear cress)).